Consider the following 478-residue polypeptide: V-type ATP synthase beta chain (478 aa).

Belongs to the ATPase alpha/beta chains family.

Its function is as follows. Produces ATP from ADP in the presence of a proton gradient across the membrane. The V-type beta chain is a regulatory subunit. In Thermus thermophilus (strain ATCC BAA-163 / DSM 7039 / HB27), this protein is V-type ATP synthase beta chain.